The primary structure comprises 221 residues: Ribosomal RNA small subunit methyltransferase Nep1 (221 aa).

S-adenosyl-L-methionine is bound by residues G174, G179, and V196–L201.

This sequence belongs to the class IV-like SAM-binding methyltransferase superfamily. RNA methyltransferase NEP1 family. Homodimer.

It carries out the reaction a pseudouridine in rRNA + S-adenosyl-L-methionine = an N(1)-methylpseudouridine in rRNA + S-adenosyl-L-homocysteine + H(+). Its function is as follows. Methyltransferase involved in ribosomal biogenesis. Specifically catalyzes the N1-methylation of the pseudouridine corresponding to position 914 in M.jannaschii 16S rRNA. This is Ribosomal RNA small subunit methyltransferase Nep1 from Pyrobaculum neutrophilum (strain DSM 2338 / JCM 9278 / NBRC 100436 / V24Sta) (Thermoproteus neutrophilus).